The sequence spans 296 residues: Ribosomal protein L11 methyltransferase (296 aa).

Thr146, Gly167, Asp189, and Asn231 together coordinate S-adenosyl-L-methionine.

It belongs to the methyltransferase superfamily. PrmA family.

The protein localises to the cytoplasm. The catalysed reaction is L-lysyl-[protein] + 3 S-adenosyl-L-methionine = N(6),N(6),N(6)-trimethyl-L-lysyl-[protein] + 3 S-adenosyl-L-homocysteine + 3 H(+). Methylates ribosomal protein L11. This chain is Ribosomal protein L11 methyltransferase, found in Haemophilus influenzae (strain ATCC 51907 / DSM 11121 / KW20 / Rd).